The sequence spans 381 residues: 3-dehydroquinate synthase (381 aa).

Residues 81–86, 115–119, 139–140, Lys-152, and Lys-161 contribute to the NAD(+) site; these read EGEVSK, GVVGD, and TS. Zn(2+) contacts are provided by Glu-194, His-256, and His-274.

The protein belongs to the sugar phosphate cyclases superfamily. Dehydroquinate synthase family. It depends on Co(2+) as a cofactor. The cofactor is Zn(2+). NAD(+) is required as a cofactor.

The protein resides in the cytoplasm. The catalysed reaction is 7-phospho-2-dehydro-3-deoxy-D-arabino-heptonate = 3-dehydroquinate + phosphate. Its pathway is metabolic intermediate biosynthesis; chorismate biosynthesis; chorismate from D-erythrose 4-phosphate and phosphoenolpyruvate: step 2/7. Catalyzes the conversion of 3-deoxy-D-arabino-heptulosonate 7-phosphate (DAHP) to dehydroquinate (DHQ). The protein is 3-dehydroquinate synthase of Rhodopseudomonas palustris (strain BisA53).